The following is a 591-amino-acid chain: Glutathione S-transferase T2 (591 aa).

The 82-residue stretch at 1 to 82 (MKLKVYADRM…YLSSAYASVV (82 aa)) folds into the GST N-terminal domain. Residues 11-12 (SQ), 40-41 (QL), 53-54 (KV), and 66-67 (ES) each bind glutathione. A GST C-terminal domain is found at 89–226 (DLSKRAKIHS…EVLFRAKDRF (138 aa)). A disordered region spans residues 229 to 272 (QREMATASKPGPQSKIIQFSSIGGTSDGPNLVQDTTDRKARRRK). The span at 243–262 (KIIQFSSIGGTSDGPNLVQD) shows a compositional bias: polar residues. The Myb-like domain occupies 265–338 (DRKARRRKWS…HCRQRWRKIN (74 aa)).

The protein belongs to the GST superfamily. Theta family.

It is found in the peroxisome. It carries out the reaction RX + glutathione = an S-substituted glutathione + a halide anion + H(+). Its function is as follows. May be involved in the conjugation of reduced glutathione to a wide number of exogenous and endogenous hydrophobic electrophiles and have a detoxification role against certain herbicides. This chain is Glutathione S-transferase T2 (GSTT2), found in Arabidopsis thaliana (Mouse-ear cress).